The following is a 118-amino-acid chain: Large ribosomal subunit protein uL18 (118 aa).

This sequence belongs to the universal ribosomal protein uL18 family. In terms of assembly, part of the 50S ribosomal subunit; part of the 5S rRNA/L5/L18/L25 subcomplex. Contacts the 5S and 23S rRNAs.

This is one of the proteins that bind and probably mediate the attachment of the 5S RNA into the large ribosomal subunit, where it forms part of the central protuberance. The sequence is that of Large ribosomal subunit protein uL18 from Rickettsia peacockii (strain Rustic).